The primary structure comprises 507 residues: Phosphoprotein (507 aa).

An interaction with N0 region spans residues Met1–Ala48. Disordered regions lie at residues Asp41 to Asn99, Gly134 to Tyr163, Asn201 to Gly231, and Gly250 to Pro273. Phosphoserine is present on Ser86. A compositionally biased stretch (low complexity) spans Gly134–Asp145. Over residues Asn146–Thr160 the composition is skewed to acidic residues. Ser151 is subject to Phosphoserine. Residues Ser260 to Gly270 show a composition bias toward low complexity. A multimerization region spans residues Gly304 to Gly376. Interaction with the L polymerase regions lie at residues Ser361–Leu377 and Pro396–Leu410. Residues Gly457 to Lys507 are x domain (XD). Residues Ala459–Lys507 form an interaction with the nucleocapsid (N-RNA) region.

This sequence belongs to the morbillivirus P protein family. As to quaternary structure, homotetramer. Interacts (via multimerization domain and XD domain) with polymerase L; this interaction forms the polymerase L-P complex. Interacts (via N-terminus) with N0 (via Ncore); this interaction allows P to chaperon N0 to avoid N polymerization and non-specific RNA binding before encapsidation. Interacts (via C-terminus) with N-RNA template (via Ntail); this interaction maintains the P/L complex anchored to the nucleocapsid template during the sequential transcription. Interacts (via C-terminus) with protein C this interaction allows C to associate with the ribonucleocapsid. Post-translationally, phosphorylation on serines by host CK2 is necessary for the formation of viral factories.

Its function is as follows. Essential cofactor of the RNA polymerase L that plays a central role in the transcription and replication by forming the polymerase complex with RNA polymerase L and recruiting L to the genomic N-RNA template for RNA synthesis. Also plays a central role in the encapsidation of nascent RNA chains by forming the encapsidation complex with the nucleocapsid protein N (N-P complex). Acts as a chaperone for newly synthesized free N protein, so-called N0, allowing encapsidation of nascent RNA chains during replication. The nucleoprotein protein N prevents excessive phosphorylation of P, which leads to down-regulation of viral transcription/ replication. Participates, together with N, in the formation of viral factories (viroplasms), which are large inclusions in the host cytoplasm where replication takes place. In Measles virus (strain Edmonston) (MeV), this protein is Phosphoprotein (P/V).